The following is a 336-amino-acid chain: Inactive serine/threonine-protein kinase PLK5 (336 aa).

A Protein kinase; truncated domain is found at 1-65 (MYTVLTGTPP…LDHLLQDDFF (65 aa)). Disordered stretches follow at residues 109–135 (PCPF…WDGE) and 224–245 (GRTG…LPTP). The region spanning 255-336 (LLRFLASEHA…HHALRMLQSI (82 aa)) is the POLO box domain.

Belongs to the protein kinase superfamily. Ser/Thr protein kinase family. CDC5/Polo subfamily. As to expression, expressed in the brain, neurons and glial cells. Also expressed in highly differentiated cells, such as the serous acini in the parotid gland, distal and proximal tubules of the kidney, tubules of the seminal gland, Kupffer cells and some hepatocytes in the liver, and some cells in the germinal center of lymph nodes (at protein level).

Its subcellular location is the nucleus. It localises to the nucleolus. It is found in the cytoplasm. Functionally, inactive serine/threonine-protein kinase that plays a role in cell cycle progression and neuronal differentiation. The polypeptide is Inactive serine/threonine-protein kinase PLK5 (PLK5) (Homo sapiens (Human)).